The sequence spans 157 residues: UPF0225 protein PA14_50900 (157 aa).

This sequence belongs to the UPF0225 family.

The protein is UPF0225 protein PA14_50900 of Pseudomonas aeruginosa (strain UCBPP-PA14).